A 354-amino-acid polypeptide reads, in one-letter code: Ferrochelatase (354 aa).

The Fe cation site is built by H204 and E306.

This sequence belongs to the ferrochelatase family.

It localises to the cytoplasm. The catalysed reaction is heme b + 2 H(+) = protoporphyrin IX + Fe(2+). Its pathway is porphyrin-containing compound metabolism; protoheme biosynthesis; protoheme from protoporphyrin-IX: step 1/1. Catalyzes the ferrous insertion into protoporphyrin IX. In Coxiella burnetii (strain Dugway 5J108-111), this protein is Ferrochelatase.